The sequence spans 351 residues: Histidinol-phosphate aminotransferase (351 aa).

Position 213 is an N6-(pyridoxal phosphate)lysine (Lys213).

Belongs to the class-II pyridoxal-phosphate-dependent aminotransferase family. Histidinol-phosphate aminotransferase subfamily. As to quaternary structure, homodimer. Requires pyridoxal 5'-phosphate as cofactor.

It catalyses the reaction L-histidinol phosphate + 2-oxoglutarate = 3-(imidazol-4-yl)-2-oxopropyl phosphate + L-glutamate. The protein operates within amino-acid biosynthesis; L-histidine biosynthesis; L-histidine from 5-phospho-alpha-D-ribose 1-diphosphate: step 7/9. This is Histidinol-phosphate aminotransferase from Clostridium kluyveri (strain NBRC 12016).